The following is a 161-amino-acid chain: MIKYTIDELFQLKPSLTLEVNFDAVEFRAIIEKVKQLQHLKEEEFNSHHVGHFGRRRSSHHHGRPKIKHNKPKVTTDSDGWCTFEAKKKGSGEDDEEETETTPTSTVPVATIAQETLKVKPNNKNISSNRPADTRDIVADKPILGFNAFAALESEDEDDEA.

Basic residues predominate over residues 52–72 (HFGRRRSSHHHGRPKIKHNKP). Residues 52 to 108 (HFGRRRSSHHHGRPKIKHNKPKVTTDSDGWCTFEAKKKGSGEDDEEETETTPTSTVP) form a disordered region. A phosphoserine mark is found at Ser-78 and Ser-91. A phosphothreonine mark is found at Thr-99, Thr-101, and Thr-102. Phosphoserine is present on Ser-154.

This sequence belongs to the CAF20 family. As to quaternary structure, interacts with TIF45. Post-translationally, phosphorylated by casein kinase II complex (CK2).

Its subcellular location is the cytoplasm. Functionally, acts as an inhibitor of cap-dependent translation. Competes with eIF4G1/TIF4631 and EAP1 for binding to eIF4E/TIF45 and interferes with the formation of the eIF4F complex, inhibiting translation and stabilizing mRNA. Binding affinity for eIF4E/TIF45 is 10-fold less than that of eIF4G1/TIF4631. Required for induction of pseudohyphal growth in response to nitrogen limitation, probably by regulating STE12 translation. This Saccharomyces cerevisiae (strain ATCC 204508 / S288c) (Baker's yeast) protein is Cap-associated protein CAF20 (CAF20).